Here is an 80-residue protein sequence, read N- to C-terminus: FXYD domain-containing ion transport regulator 7 (80 aa).

Residues 1 to 22 lie on the Extracellular side of the membrane; it reads MATPTQSPTNVPEETDPFFYDY. O-linked (GlcNAc) threonine glycosylation is found at T3, T5, and T9. A helical membrane pass occupies residues 23–45; that stretch reads ATVQTVGMTLATIMFVLGIIIIL. Residues 46–80 are Cytoplasmic-facing; the sequence is SKKVKCRKADSRSESPTCKSCKSELPSSAPGGGGV. The segment at 55–80 is disordered; it reads DSRSESPTCKSCKSELPSSAPGGGGV. At S73 the chain carries Phosphoserine.

It belongs to the FXYD family. As to quaternary structure, regulatory subunit of the sodium/potassium-transporting ATPase which is composed of a catalytic alpha subunit, a non-catalytic beta subunit and an additional regulatory subunit. The regulatory subunit, a member of the FXYD protein family, modulates the enzymatic activity in a tissue- and isoform-specific way by changing affinities of the Na+/K+-ATPase toward Na(+), K(+) or ATP. Post-translationally, O-glycosylated; required for stabilization and translocation to the plasma membrane.

Its subcellular location is the cell membrane. Associates with and regulates the activity of the sodium/potassium-transporting ATPase (NKA) which catalyzes the hydrolysis of ATP coupled with the exchange of Na(+) and K(+) ions across the plasma membrane. Reduces the apparent affinity for external K(+), an effect that depends on the presence of external Na(+) and voltage. Increases the apparent affinity for intracellular Na(+). In Mus musculus (Mouse), this protein is FXYD domain-containing ion transport regulator 7 (Fxyd7).